We begin with the raw amino-acid sequence, 1046 residues long: Translation initiation factor IF-2 (1046 aa).

The disordered stretch occupies residues Glu49–Gly448. The segment covering Pro52–Arg71 has biased composition (low complexity). Over residues Arg94–Leu111 the composition is skewed to pro residues. Low complexity-rich tracts occupy residues Pro112–Val139 and Pro147–Pro159. A compositionally biased stretch (pro residues) spans Ala160–Ala176. Low complexity predominate over residues Pro177–Pro187. Pro residues predominate over residues Pro188–Pro206. The segment covering Arg210 to Gly222 has biased composition (gly residues). Over residues Gly223–Ala235 the composition is skewed to pro residues. Positions Ser244–Ser253 are enriched in low complexity. Composition is skewed to pro residues over residues Ser260–Gly281 and Arg304–Pro314. Over residues Pro320 to Gly333 the composition is skewed to low complexity. The span at Gly334–Gly414 shows a compositional bias: gly residues. Residues Arg415–Lys426 show a composition bias toward basic residues. A tr-type G domain is found at Ala539–Asp711. The tract at residues Gly548 to Thr555 is G1. Gly548–Thr555 contributes to the GTP binding site. Residues Gly573 to His577 are G2. The segment at Asp598 to Gly601 is G3. GTP contacts are provided by residues Asp598–His602 and Asn652–Asp655. Positions Asn652 to Asp655 are G4. The G5 stretch occupies residues Ser688 to Arg690.

The protein belongs to the TRAFAC class translation factor GTPase superfamily. Classic translation factor GTPase family. IF-2 subfamily.

Its subcellular location is the cytoplasm. One of the essential components for the initiation of protein synthesis. Protects formylmethionyl-tRNA from spontaneous hydrolysis and promotes its binding to the 30S ribosomal subunits. Also involved in the hydrolysis of GTP during the formation of the 70S ribosomal complex. The sequence is that of Translation initiation factor IF-2 from Parafrankia sp. (strain EAN1pec).